A 196-amino-acid chain; its full sequence is Adenylate kinase (196 aa).

Position 9-17 (9-17) interacts with ATP; the sequence is GIPGVGKST.

Belongs to the archaeal adenylate kinase family.

The protein resides in the cytoplasm. It carries out the reaction AMP + ATP = 2 ADP. The chain is Adenylate kinase from Thermococcus kodakarensis (strain ATCC BAA-918 / JCM 12380 / KOD1) (Pyrococcus kodakaraensis (strain KOD1)).